Consider the following 440-residue polypeptide: MSYFEHIPAIRYEGPQSDNPLAYHHYDPDKRVLGKTLAEHLRIAVCYWHTFVWPGHDIFGQAAFRRPWQQPGDALERARMKADAAFEFFTKLGTPFYTFHDTDVAPEGDSLREYAANFARMVDYLGERQQASGVRLLWGTANLFSHPRFAAGAATNPNPDVFAWAATQVCHALDATHRLGGENYVLWGGREGYETLLNTDLKRERDQFARFLSMVVEHKHRIGFKGALLIEPKPQEPTKHQYDYDVATVHGFLVQYGLQNEIRVNIEANHATLAGHSFHHEIANAFALGVFGSVDANRGDPQNGWDTDQFPNSVEELTLAFYEILRHGGFTTGGMNFDAKVRRQSIDPEDLFYGHVGAIDVLALALERAAVLVENDRLDALRRQRYAQWDDAFGRKILAGGYTLESLAADALARGVDPQHASGAQERLENIVNQAIYGLR.

Catalysis depends on residues His100 and Asp103. Mg(2+) contacts are provided by Glu231, Glu267, His270, Asp295, Asp306, Asp308, and Asp338.

It belongs to the xylose isomerase family. As to quaternary structure, homotetramer. Mg(2+) is required as a cofactor.

The protein resides in the cytoplasm. It catalyses the reaction alpha-D-xylose = alpha-D-xylulofuranose. The polypeptide is Xylose isomerase (Burkholderia cenocepacia (strain ATCC BAA-245 / DSM 16553 / LMG 16656 / NCTC 13227 / J2315 / CF5610) (Burkholderia cepacia (strain J2315))).